Reading from the N-terminus, the 106-residue chain is Thioredoxin (106 aa).

Positions 1 to 106 constitute a Thioredoxin domain; that stretch reads GATVKVTNAT…RLAAFLDASL (106 aa). A disulfide bridge connects residues Cys-31 and Cys-34.

It belongs to the thioredoxin family.

Functionally, participates in various redox reactions through the reversible oxidation of its active center dithiol to a disulfide and catalyzes dithiol-disulfide exchange reactions. The polypeptide is Thioredoxin (trxA) (Kitasatospora aureofaciens (Streptomyces aureofaciens)).